A 400-amino-acid polypeptide reads, in one-letter code: Probable RNA polymerase sigma factor RfaY (400 aa).

The Polymerase core binding motif lies at 62-75; it reads WQRLAQLHQPASFL. Residues 165 to 184 constitute a DNA-binding region (H-T-H motif); it reads SDAAVRKRLSRARATVRNEL.

It belongs to the sigma-70 factor family. ECF subfamily.

Functionally, sigma factors are initiation factors that promote the attachment of RNA polymerase to specific initiation sites and are then released. This sigma factor is involved in lipopolysaccharide biosynthesis and pathogenicity. The chain is Probable RNA polymerase sigma factor RfaY (rfaY) from Xanthomonas campestris pv. campestris (strain ATCC 33913 / DSM 3586 / NCPPB 528 / LMG 568 / P 25).